The chain runs to 880 residues: Alanine--tRNA ligase (880 aa).

Zn(2+) is bound by residues histidine 563, histidine 567, cysteine 673, and histidine 677.

It belongs to the class-II aminoacyl-tRNA synthetase family. Zn(2+) serves as cofactor.

It localises to the cytoplasm. It carries out the reaction tRNA(Ala) + L-alanine + ATP = L-alanyl-tRNA(Ala) + AMP + diphosphate. Catalyzes the attachment of alanine to tRNA(Ala) in a two-step reaction: alanine is first activated by ATP to form Ala-AMP and then transferred to the acceptor end of tRNA(Ala). Also edits incorrectly charged Ser-tRNA(Ala) and Gly-tRNA(Ala) via its editing domain. The chain is Alanine--tRNA ligase from Caulobacter vibrioides (strain ATCC 19089 / CIP 103742 / CB 15) (Caulobacter crescentus).